Here is a 250-residue protein sequence, read N- to C-terminus: 5'-nucleotidase SurE (250 aa).

Residues Asp-8, Asp-9, Ser-40, and Asn-94 each contribute to the a divalent metal cation site.

This sequence belongs to the SurE nucleotidase family. A divalent metal cation is required as a cofactor.

The protein resides in the cytoplasm. The enzyme catalyses a ribonucleoside 5'-phosphate + H2O = a ribonucleoside + phosphate. Functionally, nucleotidase that shows phosphatase activity on nucleoside 5'-monophosphates. This Wolbachia pipientis wMel protein is 5'-nucleotidase SurE.